The sequence spans 441 residues: MAGUK p55 subfamily member 4 (441 aa).

The region spanning 1–84 is the PDZ domain; sequence MRTVCLVKNQ…TIMFKVIPVS (84 aa). An SH3 domain is found at 91–161; that stretch reads QTTVYVRAMI…PSNHLLKRKQ (71 aa). Residues 232–421 form the Guanylate kinase-like domain; sequence HRLIVLVGPS…ARAQLLSAIQ (190 aa). A coiled-coil region spans residues 373–430; it reads VDMKFKDEDLQEMEELAQKMESQFGQFFDHVIVNDNLQDARAQLLSAIQKAEEELQWV.

This sequence belongs to the MAGUK family. As to quaternary structure, interacts with MPDZ. May interact with GRIA2. Forms a complex with CRB1 and PALS1. Interacts with FASLG. As to expression, highly expressed in brain and detected in lung, and bone (at protein level). Also expressed in intestine and spleen.

The protein localises to the cytoplasm. Its function is as follows. May play a role in retinal photoreceptors development. The sequence is that of MAGUK p55 subfamily member 4 (Mpp4) from Rattus norvegicus (Rat).